The sequence spans 404 residues: Probable cysteine desulfurase (404 aa).

Residue lysine 226 is modified to N6-(pyridoxal phosphate)lysine. Cysteine 363 functions as the Cysteine persulfide intermediate in the catalytic mechanism.

The protein belongs to the class-V pyridoxal-phosphate-dependent aminotransferase family. Csd subfamily. Pyridoxal 5'-phosphate is required as a cofactor.

It carries out the reaction (sulfur carrier)-H + L-cysteine = (sulfur carrier)-SH + L-alanine. In terms of biological role, catalyzes the removal of elemental sulfur and selenium atoms from L-cysteine, L-cystine, L-selenocysteine, and L-selenocystine to produce L-alanine. The polypeptide is Probable cysteine desulfurase (csd) (Vibrio cholerae serotype O1 (strain ATCC 39315 / El Tor Inaba N16961)).